The following is a 213-amino-acid chain: MITRLGLIDYGMGNLRSVQIAFERLHKALHIVRQPADLSRCDALILPGVGAFDPAMVHLEQTRLVPDLKSWVKGGRPLLGICLGLQLLFESSDEGNATGLGLLKGHVQRLPSNQGERIPHMGWAALEHRNDCPLLDKEDPDSWMYFVHSYAAVPSQNSDLAAIAPFGRDNITAMVWKGRLGACQFHPEKSAAAGERMLRRWLNWLETGAKPVP.

Residues 4-211 (RLGLIDYGMG…LNWLETGAKP (208 aa)) enclose the Glutamine amidotransferase type-1 domain. Cysteine 82 (nucleophile) is an active-site residue. Residues histidine 186 and glutamate 188 contribute to the active site.

Heterodimer of HisH and HisF.

It is found in the cytoplasm. It catalyses the reaction 5-[(5-phospho-1-deoxy-D-ribulos-1-ylimino)methylamino]-1-(5-phospho-beta-D-ribosyl)imidazole-4-carboxamide + L-glutamine = D-erythro-1-(imidazol-4-yl)glycerol 3-phosphate + 5-amino-1-(5-phospho-beta-D-ribosyl)imidazole-4-carboxamide + L-glutamate + H(+). The catalysed reaction is L-glutamine + H2O = L-glutamate + NH4(+). The protein operates within amino-acid biosynthesis; L-histidine biosynthesis; L-histidine from 5-phospho-alpha-D-ribose 1-diphosphate: step 5/9. Functionally, IGPS catalyzes the conversion of PRFAR and glutamine to IGP, AICAR and glutamate. The HisH subunit provides the glutamine amidotransferase activity that produces the ammonia necessary to HisF for the synthesis of IGP and AICAR. The protein is Imidazole glycerol phosphate synthase subunit HisH 2 (hisH2) of Prochlorococcus marinus (strain MIT 9313).